The following is a 482-amino-acid chain: tRNA sulfurtransferase (482 aa).

The region spanning 61–165 (LAIRDALTRI…DDRLLLIKGR (105 aa)) is the THUMP domain. ATP contacts are provided by residues 183 to 184 (LI), Lys265, Gly287, and Gln296. Residues Cys344 and Cys456 are joined by a disulfide bond. In terms of domain architecture, Rhodanese spans 404–482 (FGPNDVILDI…GFNNVKVYRP (79 aa)). Cys456 (cysteine persulfide intermediate) is an active-site residue.

Belongs to the ThiI family.

It localises to the cytoplasm. The enzyme catalyses [ThiI sulfur-carrier protein]-S-sulfanyl-L-cysteine + a uridine in tRNA + 2 reduced [2Fe-2S]-[ferredoxin] + ATP + H(+) = [ThiI sulfur-carrier protein]-L-cysteine + a 4-thiouridine in tRNA + 2 oxidized [2Fe-2S]-[ferredoxin] + AMP + diphosphate. It catalyses the reaction [ThiS sulfur-carrier protein]-C-terminal Gly-Gly-AMP + S-sulfanyl-L-cysteinyl-[cysteine desulfurase] + AH2 = [ThiS sulfur-carrier protein]-C-terminal-Gly-aminoethanethioate + L-cysteinyl-[cysteine desulfurase] + A + AMP + 2 H(+). It participates in cofactor biosynthesis; thiamine diphosphate biosynthesis. Functionally, catalyzes the ATP-dependent transfer of a sulfur to tRNA to produce 4-thiouridine in position 8 of tRNAs, which functions as a near-UV photosensor. Also catalyzes the transfer of sulfur to the sulfur carrier protein ThiS, forming ThiS-thiocarboxylate. This is a step in the synthesis of thiazole, in the thiamine biosynthesis pathway. The sulfur is donated as persulfide by IscS. The sequence is that of tRNA sulfurtransferase from Escherichia coli O139:H28 (strain E24377A / ETEC).